Reading from the N-terminus, the 280-residue chain is Homeobox protein SMOX-1 (280 aa).

The tract at residues 61-88 (PNNNSFQLNTTNDSNNNNTTNNGNDSRS) is disordered. Residues 69 to 85 (NTTNDSNNNNTTNNGND) are compositionally biased toward low complexity. An Antp-type hexapeptide motif is present at residues 214 to 219 (VYPWMN). The homeobox DNA-binding region spans 229 to 280 (QKRTRQTYTRYQTLELEKEFHFNKYLTRRRRIEIAHTLTLTERQIKIWFQNR).

Belongs to the Antp homeobox family.

It localises to the nucleus. The chain is Homeobox protein SMOX-1 (SMOX-1) from Schistosoma mansoni (Blood fluke).